Here is a 204-residue protein sequence, read N- to C-terminus: Transcriptional regulator GfcR (204 aa).

It belongs to the purine/pyrimidine phosphoribosyltransferase family. GfcR subfamily.

This Methanosarcina mazei (strain ATCC BAA-159 / DSM 3647 / Goe1 / Go1 / JCM 11833 / OCM 88) (Methanosarcina frisia) protein is Transcriptional regulator GfcR.